The following is a 275-amino-acid chain: MQQLQADFRDPRCVSPVDFADHDAPSQIVGNVEEHGFALVDMADAGPPDARIAALSTALRLGEPYIPALYRYGETKDYSAPYSDIRSEPTDRHPGFSTTAGQIWHVDGLLDDIGEIKTTILYCVRAAHRGGDTMLFNSLAAFAELREKDQDAAEALLSPAALNRRSTIPGIDVNATGPVFSVDDNGDLVTRYTDNETCTWDYSAGPPGGLRRALDFLRTATDDPRYRLAVRLAPGQALVFRNDRLSHGRQPYEDKPDARRHLVRALYAEAPRASN.

Residues H105, D107, and H247 each contribute to the Fe cation site.

The cofactor is Fe(2+).

The catalysed reaction is UMP + 2-oxoglutarate + O2 = uridine-5'-aldehyde + succinate + phosphate + CO2. The protein operates within antibiotic biosynthesis. Its activity is regulated as follows. Enhanced by ascorbic acid and inhibited by Zn(2+). Its function is as follows. Dioxygenase involved in the biosynthesis of the capuramycin-type nucleoside antibiotic A-102395. Catalyzes the dephosphorylation and oxidation of UMP to generate uridine-5'-aldehyde. Can also use the alternative alpha-keto acids pyruvate and alpha-ketoadipate (2-oxoadipate), with very low efficiency. Cannot use alpha-ketobutyrate, alpha-ketovalerate and oxaloacetate. This is Uridine-5'-phosphate dioxygenase from Amycolatopsis sp.